We begin with the raw amino-acid sequence, 179 residues long: Large ribosomal subunit protein uL5 (179 aa).

It belongs to the universal ribosomal protein uL5 family. In terms of assembly, part of the 50S ribosomal subunit; part of the 5S rRNA/L5/L18/L25 subcomplex. Contacts the 5S rRNA and the P site tRNA. Forms a bridge to the 30S subunit in the 70S ribosome.

Functionally, this is one of the proteins that bind and probably mediate the attachment of the 5S RNA into the large ribosomal subunit, where it forms part of the central protuberance. In the 70S ribosome it contacts protein S13 of the 30S subunit (bridge B1b), connecting the 2 subunits; this bridge is implicated in subunit movement. Contacts the P site tRNA; the 5S rRNA and some of its associated proteins might help stabilize positioning of ribosome-bound tRNAs. In Shewanella baltica (strain OS223), this protein is Large ribosomal subunit protein uL5.